The following is a 455-amino-acid chain: Chromosomal replication initiator protein DnaA (455 aa).

Residues 1–77 (MASLNENQKF…GFEVFGRMID (77 aa)) are domain I, interacts with DnaA modulators. Positions 77-116 (DYELYANDELTELELHRLNNQSSIEEQPRSTAKPASPLVS) are domain II. Residues 117–333 (GLNEKYNFEN…GALNRVEFVA (217 aa)) form a domain III, AAA+ region region. Residues glycine 161, glycine 163, lysine 164, and threonine 165 each coordinate ATP. A domain IV, binds dsDNA region spans residues 334-455 (RANGIAVVDI…KDIDSIKRKF (122 aa)).

Belongs to the DnaA family. As to quaternary structure, oligomerizes as a right-handed, spiral filament on DNA at oriC.

The protein resides in the cytoplasm. Its function is as follows. Plays an essential role in the initiation and regulation of chromosomal replication. ATP-DnaA binds to the origin of replication (oriC) to initiate formation of the DNA replication initiation complex once per cell cycle. Binds the DnaA box (a 9 base pair repeat at the origin) and separates the double-stranded (ds)DNA. Forms a right-handed helical filament on oriC DNA; dsDNA binds to the exterior of the filament while single-stranded (ss)DNA is stabiized in the filament's interior. The ATP-DnaA-oriC complex binds and stabilizes one strand of the AT-rich DNA unwinding element (DUE), permitting loading of DNA polymerase. After initiation quickly degrades to an ADP-DnaA complex that is not apt for DNA replication. Binds acidic phospholipids. The chain is Chromosomal replication initiator protein DnaA from Lactococcus lactis subsp. lactis (strain IL1403) (Streptococcus lactis).